We begin with the raw amino-acid sequence, 430 residues long: 3-phosphoshikimate 1-carboxyvinyltransferase (430 aa).

Residues lysine 21, serine 22, and arginine 26 each contribute to the 3-phosphoshikimate site. Lysine 21 serves as a coordination point for phosphoenolpyruvate. Glycine 94 and arginine 122 together coordinate phosphoenolpyruvate. Residues serine 168, glutamine 170, aspartate 315, and lysine 342 each contribute to the 3-phosphoshikimate site. Glutamine 170 provides a ligand contact to phosphoenolpyruvate. Residue aspartate 315 is the Proton acceptor of the active site. Positions 346 and 389 each coordinate phosphoenolpyruvate.

This sequence belongs to the EPSP synthase family. Monomer.

The protein resides in the cytoplasm. The enzyme catalyses 3-phosphoshikimate + phosphoenolpyruvate = 5-O-(1-carboxyvinyl)-3-phosphoshikimate + phosphate. It participates in metabolic intermediate biosynthesis; chorismate biosynthesis; chorismate from D-erythrose 4-phosphate and phosphoenolpyruvate: step 6/7. Functionally, catalyzes the transfer of the enolpyruvyl moiety of phosphoenolpyruvate (PEP) to the 5-hydroxyl of shikimate-3-phosphate (S3P) to produce enolpyruvyl shikimate-3-phosphate and inorganic phosphate. The sequence is that of 3-phosphoshikimate 1-carboxyvinyltransferase from Salinibacter ruber (strain DSM 13855 / M31).